The sequence spans 128 residues: Large ribosomal subunit protein bL12 (128 aa).

Residues 97–128 (GAPSTLKEGVSKEDAEEAKKQLTEAGATVEVK) are disordered. The segment covering 105-118 (GVSKEDAEEAKKQL) has biased composition (basic and acidic residues).

The protein belongs to the bacterial ribosomal protein bL12 family. In terms of assembly, homodimer. Part of the ribosomal stalk of the 50S ribosomal subunit. Forms a multimeric L10(L12)X complex, where L10 forms an elongated spine to which 2 to 4 L12 dimers bind in a sequential fashion. Binds GTP-bound translation factors.

In terms of biological role, forms part of the ribosomal stalk which helps the ribosome interact with GTP-bound translation factors. Is thus essential for accurate translation. The chain is Large ribosomal subunit protein bL12 from Lawsonia intracellularis (strain PHE/MN1-00).